Consider the following 554-residue polypeptide: (Z)-gamma-bisabolene synthase 2 (554 aa).

4 residues coordinate Mg(2+): aspartate 306, aspartate 310, aspartate 450, and aspartate 458. The DDXXD motif signature appears at aspartate 306–aspartate 310.

Belongs to the terpene synthase family. Tpsa subfamily. Mg(2+) is required as a cofactor. Mn(2+) serves as cofactor. In terms of tissue distribution, predominantly expressed in roots. Expressed in the cortex and the sub-epidermal layers of roots. Also detected in leaf hydathodes and flower stigmata.

The protein localises to the cytoplasm. It catalyses the reaction (2E,6E)-farnesyl diphosphate = (Z)-gamma-bisabolene + diphosphate. Its pathway is secondary metabolite biosynthesis; terpenoid biosynthesis. Functionally, involved in sesquiterpene (C15) biosynthesis. The major product is (Z)-gamma-bisabolene with minor amounts of (E)-nerolidol and alpha-bisabolol. The protein is (Z)-gamma-bisabolene synthase 2 (TPS13) of Arabidopsis thaliana (Mouse-ear cress).